The chain runs to 225 residues: PKHD-type hydroxylase YbiX (225 aa).

The Fe2OG dioxygenase domain maps to Thr-78–Ser-177. His-96, Asp-98, and His-158 together coordinate Fe cation. Arg-168 contacts 2-oxoglutarate.

Fe(2+) is required as a cofactor. Requires L-ascorbate as cofactor.

This Shigella flexneri serotype 5b (strain 8401) protein is PKHD-type hydroxylase YbiX.